Reading from the N-terminus, the 210-residue chain is Proline-rich protein 20G (210 aa).

Positions 1-11 (MEEPRHSKRPR) are enriched in basic residues. The interval 1-82 (MEEPRHSKRP…GGSWRAGRGR (82 aa)) is disordered. Gly residues predominate over residues 69 to 82 (GQRGGGSWRAGRGR).

Belongs to the PRR20 family.

The polypeptide is Proline-rich protein 20G (Homo sapiens (Human)).